Reading from the N-terminus, the 577-residue chain is Aspartate--tRNA(Asp/Asn) ligase (577 aa).

Glu-171 is an L-aspartate binding site. Residues Gln-195–Lys-198 form an aspartate region. Position 217 (Arg-217) interacts with L-aspartate. Residues Arg-217–Glu-219 and Gln-226 contribute to the ATP site. His-444 is an L-aspartate binding site. An ATP-binding site is contributed by Glu-474. Arg-481 contacts L-aspartate. Gly-526–Arg-529 lines the ATP pocket.

Belongs to the class-II aminoacyl-tRNA synthetase family. Type 1 subfamily. Homodimer.

It is found in the cytoplasm. It carries out the reaction tRNA(Asx) + L-aspartate + ATP = L-aspartyl-tRNA(Asx) + AMP + diphosphate. In terms of biological role, aspartyl-tRNA synthetase with relaxed tRNA specificity since it is able to aspartylate not only its cognate tRNA(Asp) but also tRNA(Asn). Reaction proceeds in two steps: L-aspartate is first activated by ATP to form Asp-AMP and then transferred to the acceptor end of tRNA(Asp/Asn). This is Aspartate--tRNA(Asp/Asn) ligase from Helicobacter pylori (strain Shi470).